The chain runs to 136 residues: ATP synthase epsilon chain (136 aa).

This sequence belongs to the ATPase epsilon chain family. F-type ATPases have 2 components, CF(1) - the catalytic core - and CF(0) - the membrane proton channel. CF(1) has five subunits: alpha(3), beta(3), gamma(1), delta(1), epsilon(1). CF(0) has three main subunits: a, b and c.

It localises to the cell membrane. Functionally, produces ATP from ADP in the presence of a proton gradient across the membrane. The polypeptide is ATP synthase epsilon chain (Ureaplasma parvum serovar 3 (strain ATCC 27815 / 27 / NCTC 11736)).